A 1059-amino-acid polypeptide reads, in one-letter code: Cellulose synthase catalytic subunit A [UDP-forming] (1059 aa).

2 disordered regions span residues 1–159 and 174–220; these read MDRN…RFDT and MRQH…KHVA. A compositionally biased stretch (low complexity) spans 15–36; sequence NNINSSGGSYNNSMNNSSNNIG. Composition is skewed to polar residues over residues 40–57 and 142–154; these read GNNQ…QSNL and NSPS…TSGG. Residues 181 to 194 are compositionally biased toward low complexity; sequence QEQQQQQQQQQQQQ. The span at 204–219 shows a compositional bias: basic residues; sequence QKKKPSSMQLSKKKHV. A run of 3 helical transmembrane segments spans residues 246–266, 280–300, and 306–323; these read FSHA…IFYF, ITFS…LGSA, and FTNP…QILA. Residues 328-628 form a catalytic subdomain A region; it reads KHPTVMMYVC…FLGLLDADQQ (301 aa). Asp370 is a catalytic residue. Residues Asp624 and Asp626 each coordinate substrate. Residues 701–761 are catalytic subdomain B; the sequence is QPLYDIGGIM…EQRKRWAQGA (61 aa). The active site involves Asp717. A run of 2 helical transmembrane segments spans residues 790–810 and 813–833; these read IYPF…IMSI and VPIV…PVMV. The tract at residues 933-953 is disordered; it reads DNAQESSGKHKAEQSFRTSNK. Positions 939–953 are enriched in basic and acidic residues; it reads SGKHKAEQSFRTSNK. 3 consecutive transmembrane segments (helical) span residues 963–983, 993–1013, and 1035–1055; these read LFLP…SAVL, WLLV…WSFI, and IVLF…KVCI.

It belongs to the glycosyltransferase 2 family. It depends on Mg(2+) as a cofactor.

Its subcellular location is the membrane. It catalyses the reaction [(1-&gt;4)-beta-D-glucosyl](n) + UDP-alpha-D-glucose = [(1-&gt;4)-beta-D-glucosyl](n+1) + UDP + H(+). Its pathway is glycan metabolism; amoeba cellulose biosynthesis. Its function is as follows. Catalytic subunit of cellulose synthase. It incorporates glucose from uridine 5'-diphosphate glucose (UDP-alpha-D-glucose) to cellulose (a (1-&gt;4)-beta-D-glucan), which is produced as an extracellular component for mechanical and chemical protection at the onset of the stalk formation, when the cells exhibit multicellular behavior during culmination. The chain is Cellulose synthase catalytic subunit A [UDP-forming] (dcsA) from Dictyostelium discoideum (Social amoeba).